We begin with the raw amino-acid sequence, 1134 residues long: Envelopment polyprotein (1134 aa).

The first 16 residues, 1–16 (MWSLLLLAALVGQGFA), serve as a signal peptide directing secretion. Over 17–484 (LKNVFDMRIQ…PGFHGWATAA (468 aa)) the chain is Lumenal. Cystine bridges form between C27–C149, C61–C155, C107–C126, C131–C136, C173–C183, C208–C245, C232–C349, C374–C433, C378–C387, and C403–C422. N-linked (GlcNAc...) asparagine; by host glycosylation occurs at N132. N233 and N345 each carry an N-linked (GlcNAc...) asparagine; by host glycan. Residue N397 is glycosylated (N-linked (GlcNAc...) asparagine; by host). The helical transmembrane segment at 485 to 504 (LLITFCFGWVLIPACTLAIL) threads the bilayer. At 505–626 (LVLKFFANIL…NLFRYKSRCY (122 aa)) the chain is on the cytoplasmic side. A binding to the ribonucleoprotein region spans residues 514-531 (LHTSNQENRFKAILRKIK). 2 consecutive CCHC-type zinc fingers follow at residues 543–563 (CEIC…NLSC) and 568–589 (CPYC…YKVC). 3 binding to the ribonucleoprotein regions span residues 586 to 603 (YKVC…KKTV), 590 to 601 (QATHRFREDLKK), and 609 to 623 (WARL…RYKS). Residues 609-632 (WARLYRTLNLFRYKSRCYILTMWT) enclose the ITAM domain. Positions 613–616 (YRTL) match the YxxL motif. A helical transmembrane segment spans residues 627-647 (ILTMWTLLLIIESILWAASAA). Topologically, residues 648 to 1105 (EIPLVPLWTD…WVMGIINGNW (458 aa)) are lumenal. Disulfide bonds link C734–C769, C738–C776, C750–C884, C764–C895, C779–C903, C805–C814, C822–C831, and C862–C866. The fusion loop stretch occupies residues 756-776 (YEYENSWACNPPDCPGVGTGC). A glycan (N-linked (GlcNAc...) asparagine; by host) is linked at N927. Disulfide bonds link C969/C999, C992/C1044, C1009/C1014, C1045/C1050, and C1084/C1088. Residues 1106–1125 (VVLIVLCVLLLFSLILLSIL) traverse the membrane as a helical segment. Residues 1121-1134 (LLSILCPVRKHKKS) are binding to the ribonucleoprotein. Topologically, residues 1126–1134 (CPVRKHKKS) are cytoplasmic.

The protein belongs to the hantavirus envelope glycoprotein family. In terms of assembly, homodimer. Homotetramer; forms heterotetrameric Gn-Gc spikes in the pre-fusion conformation. Interacts (via C-terminus) with the nucleoprotein. Interacts with host TUFM; this interaction contributes to the virus-induced degradation of mitochondria by autophagy, which leads to degradation of host MAVS and inhibition of type I interferon (IFN) responses. Interacts with host MAP1LC3B; this interaction contributes to the virus-induced degradation of mitochondria by autophagy, which leads to degradation of host MAVS and inhibition of type I interferon (IFN) responses. As to quaternary structure, homodimer. Homotetramer; forms heterotetrameric Gn-Gc spikes in the pre-fusion conformation. Homotrimer; forms homotrimer in the post-fusion conformation at acidic pH. Interacts (via C-terminus) with the nucleoprotein. Post-translationally, envelope polyprotein precursor is quickly cleaved in vivo just after synthesis, presumably by host signal peptidase.

The protein resides in the virion membrane. It is found in the host cell surface. The protein localises to the host Golgi apparatus membrane. It localises to the host endoplasmic reticulum membrane. Its subcellular location is the host mitochondrion. Functionally, forms homotetramers with glycoprotein C at the surface of the virion. Attaches the virion to host cell receptors including integrin ITGAV/ITGB3. This attachment induces virion internalization predominantly through clathrin-dependent endocytosis. Mediates the assembly and budding of infectious virus particles through its interaction with the nucleocapsid protein and the viral genome. May dysregulate normal immune and endothelial cell responses through an ITAM motif. Translocates to mitochondria, binds to host TUFM and recruits MAP1LC3B. These interactions induce mitochondrial autophagy and therefore destruction of host MAVS leading to inhibition of type I interferon (IFN) responses. Concomitant breakdown of glycoprotein N is apparently prevented by the nucleoprotein that may inhibit Gn-stimulated autophagosome-lysosome fusion. Interacts with the viral genomic RNA. Its function is as follows. Forms homotetramers with glycoprotein N at the surface of the virion. Attaches the virion to host cell receptors including integrin ITGAV/ITGB3. This attachment induces virion internalization predominantly through clathrin-dependent endocytosis. Class II fusion protein that promotes fusion of viral membrane with host endosomal membrane after endocytosis of the virion. The sequence is that of Envelopment polyprotein (GP) from Homo sapiens (Human).